A 295-amino-acid polypeptide reads, in one-letter code: Tyrosine recombinase XerD (295 aa).

Positions Met-1–Leu-85 constitute a Core-binding (CB) domain. A Tyr recombinase domain is found at Lys-106 to Thr-289. Residues Arg-146, Lys-170, His-241, Arg-244, and His-267 contribute to the active site. The O-(3'-phospho-DNA)-tyrosine intermediate role is filled by Tyr-276.

Belongs to the 'phage' integrase family. XerD subfamily. Forms a cyclic heterotetrameric complex composed of two molecules of XerC and two molecules of XerD.

The protein resides in the cytoplasm. Its function is as follows. Site-specific tyrosine recombinase, which acts by catalyzing the cutting and rejoining of the recombining DNA molecules. The XerC-XerD complex is essential to convert dimers of the bacterial chromosome into monomers to permit their segregation at cell division. It also contributes to the segregational stability of plasmids. The sequence is that of Tyrosine recombinase XerD from Staphylococcus epidermidis (strain ATCC 12228 / FDA PCI 1200).